The primary structure comprises 1006 residues: Phosphatidylinositol 4,5-bisphosphate 5-phosphatase A (1006 aa).

The disordered stretch occupies residues 1–416 (MEGQSSRGSR…SSSPWSAQPT (416 aa)). The segment covering 27–41 (VAQTGAPSKVDSSFQ) has biased composition (polar residues). The residue at position 56 (Arg-56) is an Asymmetric dimethylarginine; alternate. Arg-56 is subject to Omega-N-methylarginine; alternate. Position 65 is an omega-N-methylarginine (Arg-65). An Asymmetric dimethylarginine modification is found at Arg-76. Arg-83 is modified (asymmetric dimethylarginine; alternate). Arg-83 carries the omega-N-methylarginine; alternate modification. A compositionally biased stretch (polar residues) spans 94-112 (GQKTATAHRSSSLAPTSVG). Positions 102 to 107 (RSSSLA) match the RSXSXX motif 1 motif. Over residues 180–193 (LAASGLSLALASEE) the composition is skewed to low complexity. The span at 196-209 (PELPSTPSPVPSPV) shows a compositional bias: pro residues. The span at 210–234 (LSPTQEQALAPASTASGAASVGQTS) shows a compositional bias: low complexity. Residues 256 to 273 (PAQTSGPTGSPPCIQTSP) show a composition bias toward polar residues. Phosphoserine is present on residues Ser-291 and Ser-324. Over residues 337-347 (VPPPLPKPPRS) the composition is skewed to pro residues. Positions 345–350 (PRSPSR) match the SH3-binding motif. 2 stretches are compositionally biased toward low complexity: residues 348-360 (PSRS…NRSP) and 398-409 (TTSSSTSTLSSS). Positions 350–355 (RSPSHS) match the RSXSXX motif 2 motif. The tract at residues 425 to 728 (ITVVTWNVGT…SDHKPVAAQF (304 aa)) is catalytic. A required for ruffle localization region spans residues 729–840 (LLQFAFRDDM…IGITEPFQIS (112 aa)). A compositionally biased stretch (low complexity) spans 844-858 (SELASSSTDSSGTSS). Positions 844-1006 (SELASSSTDS…RGLEEGGLGP (163 aa)) are disordered. Short sequence motifs (RSXSXX motif) lie at residues 874–879 (RSPSPG) and 885–890 (RSRSPG). Ser-903 is subject to Phosphoserine. Residues 911–916 (RSPSPQ) carry the RSXSXX motif 5 motif. Low complexity predominate over residues 927–946 (RSSNGSSRGSSEEGPSGLPG). At Ser-990 the chain carries Phosphoserine.

Belongs to the inositol 1,4,5-trisphosphate 5-phosphatase type II family.

Its subcellular location is the cytoplasm. It catalyses the reaction 1D-myo-inositol 1,4,5-trisphosphate + H2O = 1D-myo-inositol 1,4-bisphosphate + phosphate. The enzyme catalyses 1D-myo-inositol 1,3,4,5-tetrakisphosphate + H2O = 1D-myo-inositol 1,3,4-trisphosphate + phosphate. It carries out the reaction a 1,2-diacyl-sn-glycero-3-phospho-(1D-myo-inositol-4,5-bisphosphate) + H2O = a 1,2-diacyl-sn-glycero-3-phospho-(1D-myo-inositol 4-phosphate) + phosphate. Inositol 5-phosphatase, which converts inositol 1,4,5-trisphosphate to inositol 1,4-bisphosphate. Also converts phosphatidylinositol 4,5-bisphosphate to phosphatidylinositol 4-phosphate and inositol 1,3,4,5-tetrakisphosphate to inositol 1,3,4-trisphosphate in vitro. May be involved in modulation of the function of inositol and phosphatidylinositol polyphosphate-binding proteins that are present at membranes ruffles. The sequence is that of Phosphatidylinositol 4,5-bisphosphate 5-phosphatase A (INPP5J) from Homo sapiens (Human).